Here is a 351-residue protein sequence, read N- to C-terminus: Ribonucleoside-diphosphate reductase subunit M2 B (351 aa).

The tract at residues 1–31 (MGDPERPEAAGLDQDERSSSDTNENEIKSNE) is disordered. Aspartate 100, glutamate 131, and histidine 134 together coordinate Fe cation. Tyrosine 138 is a catalytic residue. Residues glutamate 194, glutamate 228, and histidine 231 each coordinate Fe cation.

Belongs to the ribonucleoside diphosphate reductase small chain family. Heterotetramer with large (RRM1) subunit. Interacts with p53/TP53. Interacts with RRM1 in response to DNA damage. The cofactor is Fe cation.

It localises to the cytoplasm. The protein resides in the nucleus. It carries out the reaction a 2'-deoxyribonucleoside 5'-diphosphate + [thioredoxin]-disulfide + H2O = a ribonucleoside 5'-diphosphate + [thioredoxin]-dithiol. Plays a pivotal role in cell survival by repairing damaged DNA in a p53/TP53-dependent manner. Supplies deoxyribonucleotides for DNA repair in cells arrested at G1 or G2. Contains an iron-tyrosyl free radical center required for catalysis. Forms an active ribonucleotide reductase (RNR) complex with RRM1 which is expressed both in resting and proliferating cells in response to DNA damage. In Pongo abelii (Sumatran orangutan), this protein is Ribonucleoside-diphosphate reductase subunit M2 B (RRM2B).